Reading from the N-terminus, the 166-residue chain is Small ribosomal subunit protein uS5 (166 aa).

The 64-residue stretch at 11-74 (LNEKLIAVNR…EKARRNMFTI (64 aa)) folds into the S5 DRBM domain.

This sequence belongs to the universal ribosomal protein uS5 family. As to quaternary structure, part of the 30S ribosomal subunit. Contacts proteins S4 and S8.

Its function is as follows. With S4 and S12 plays an important role in translational accuracy. Located at the back of the 30S subunit body where it stabilizes the conformation of the head with respect to the body. The protein is Small ribosomal subunit protein uS5 of Aliivibrio fischeri (strain ATCC 700601 / ES114) (Vibrio fischeri).